A 551-amino-acid chain; its full sequence is Solute carrier family 22 member 3 (551 aa).

The chain crosses the membrane as a helical span at residues 21–41 (VFLLLCLTGVTFAFLFVGVVF). N-linked (GlcNAc...) asparagine glycans are attached at residues N72, N99, and N114. The chain crosses the membrane as a helical span at residues 177 to 197 (LIIYLISCFGVGITGVVVAFA). N199 is a glycosylation site (N-linked (GlcNAc...) asparagine). The next 2 helical transmembrane spans lie at 236-256 (IVGI…PGIA) and 264-284 (GIQL…WVVP). The Proline-rich sequence signature appears at 284–288 (PESPR). N317 carries N-linked (GlcNAc...) asparagine glycosylation. 3 helical membrane passes run 376 to 396 (IDFF…LLTI), 464 to 484 (GVSL…FLLF), and 493 to 513 (LPLI…MLLP).

The protein belongs to the major facilitator (TC 2.A.1) superfamily. Organic cation transporter (TC 2.A.1.19) family. As to expression, highly expressed in placenta. Highly expressed in kidney cortex. In kidney, expressed specifically in the proximal and distal convoluted tubules and within Bowman capsule. Expressed in brain, particularly in dopaminergic neurons of the substantia nigra compacta, non-aminergic neurons of the ventral tegmental area, substantia nigra reticulata, locus coeruleus, hippocampus and cortex. In brain, also detected in astrocytes in the substantia nigra reticulata, several hypothalamic nuclei and nigrostriatal region. Expressed in neurons and glial cells of amygdala.

The protein resides in the cell membrane. It is found in the apical cell membrane. It localises to the basolateral cell membrane. The protein localises to the mitochondrion membrane. Its subcellular location is the endomembrane system. The protein resides in the nucleus membrane. It is found in the nucleus outer membrane. It catalyses the reaction (R)-noradrenaline(out) = (R)-noradrenaline(in). The catalysed reaction is (R)-adrenaline(out) = (R)-adrenaline(in). The enzyme catalyses serotonin(out) = serotonin(in). It carries out the reaction dopamine(out) = dopamine(in). It catalyses the reaction histamine(out) = histamine(in). The catalysed reaction is tyramine(in) = tyramine(out). The enzyme catalyses guanidine(out) = guanidine(in). It carries out the reaction agmatine(out) = agmatine(in). It catalyses the reaction spermidine(in) = spermidine(out). The catalysed reaction is L-histidyl-L-proline diketopiperazine(in) = L-histidyl-L-proline diketopiperazine(out). The enzyme catalyses (R)-salsolinol(in) = (R)-salsolinol(out). Functionally, electrogenic voltage-dependent transporter that mediates the transport of a variety of organic cations such as endogenous bioactive amines, cationic drugs and xenobiotics. Cation cellular uptake or release is driven by the electrochemical potential, i.e. membrane potential and concentration gradient. Functions as a Na(+)- and Cl(-)-independent, bidirectional uniporter. Implicated in monoamine neurotransmitters uptake such as dopamine, adrenaline/epinephrine, noradrenaline/norepinephrine, homovanillic acid, histamine, serotonin and tyramine, thereby supporting a role in homeostatic regulation of aminergic neurotransmission in the brain. Transports dopaminergic neuromodulators cyclo(his-pro) and salsolinol with low efficiency. May be involved in the uptake and disposition of cationic compounds by renal clearance from the blood flow. May contribute to regulate the transport of cationic compounds in testis across the blood-testis-barrier. Mediates the transport of polyamine spermidine and putrescine. Mediates the bidirectional transport of polyamine agmatine. Also transports guanidine. May also mediate intracellular transport of organic cations, thereby playing a role in amine metabolism and intracellular signaling. The polypeptide is Solute carrier family 22 member 3 (Mus musculus (Mouse)).